A 547-amino-acid polypeptide reads, in one-letter code: Chaperonin GroEL (547 aa).

Residues 30-33, Lys-51, 87-91, Gly-415, 479-481, and Asp-495 contribute to the ATP site; these read TLGP, DGTTT, and NAA.

This sequence belongs to the chaperonin (HSP60) family. As to quaternary structure, forms a cylinder of 14 subunits composed of two heptameric rings stacked back-to-back. Interacts with the co-chaperonin GroES.

It localises to the cytoplasm. The enzyme catalyses ATP + H2O + a folded polypeptide = ADP + phosphate + an unfolded polypeptide.. In terms of biological role, together with its co-chaperonin GroES, plays an essential role in assisting protein folding. The GroEL-GroES system forms a nano-cage that allows encapsulation of the non-native substrate proteins and provides a physical environment optimized to promote and accelerate protein folding. The sequence is that of Chaperonin GroEL from Bordetella bronchiseptica (strain ATCC BAA-588 / NCTC 13252 / RB50) (Alcaligenes bronchisepticus).